The primary structure comprises 158 residues: uncharacterized protein (158 aa).

The N-terminal stretch at 1–16 (MFRPILILTILSCVLA) is a signal peptide. N-linked (GlcNAc...) asparagine glycosylation occurs at asparagine 122.

This is an uncharacterized protein from Caenorhabditis elegans.